Consider the following 221-residue polypeptide: N-(5'-phosphoribosyl)anthranilate isomerase (221 aa).

It belongs to the TrpF family.

The catalysed reaction is N-(5-phospho-beta-D-ribosyl)anthranilate = 1-(2-carboxyphenylamino)-1-deoxy-D-ribulose 5-phosphate. It participates in amino-acid biosynthesis; L-tryptophan biosynthesis; L-tryptophan from chorismate: step 3/5. This chain is N-(5'-phosphoribosyl)anthranilate isomerase, found in Chlorobaculum parvum (strain DSM 263 / NCIMB 8327) (Chlorobium vibrioforme subsp. thiosulfatophilum).